The chain runs to 51 residues: Large ribosomal subunit protein bL33 (51 aa).

It belongs to the bacterial ribosomal protein bL33 family.

This chain is Large ribosomal subunit protein bL33, found in Pseudoalteromonas translucida (strain TAC 125).